The primary structure comprises 166 residues: Interferon gamma (166 aa).

The signal sequence occupies residues 1–23; sequence MKYTSSFLALLLCVLLGFSGSYG. Q24 carries the pyrrolidone carboxylic acid modification. N-linked (GlcNAc...) asparagine glycans are attached at residues N39 and N106.

Belongs to the type II (or gamma) interferon family. Homodimer. Interacts with IFNGR1 (via extracellular domain); this interaction promotes IFNGR1 dimerization. In terms of tissue distribution, released primarily from activated T lymphocytes.

The protein resides in the secreted. Functionally, type II interferon produced by immune cells such as T-cells and NK cells that plays crucial roles in antimicrobial, antiviral, and antitumor responses by activating effector immune cells and enhancing antigen presentation. Primarily signals through the JAK-STAT pathway after interaction with its receptor IFNGR1 to affect gene regulation. Upon IFNG binding, IFNGR1 intracellular domain opens out to allow association of downstream signaling components JAK2, JAK1 and STAT1, leading to STAT1 activation, nuclear translocation and transcription of IFNG-regulated genes. Many of the induced genes are transcription factors such as IRF1 that are able to further drive regulation of a next wave of transcription. Plays a role in class I antigen presentation pathway by inducing a replacement of catalytic proteasome subunits with immunoproteasome subunits. In turn, increases the quantity, quality, and repertoire of peptides for class I MHC loading. Increases the efficiency of peptide generation also by inducing the expression of activator PA28 that associates with the proteasome and alters its proteolytic cleavage preference. Up-regulates as well MHC II complexes on the cell surface by promoting expression of several key molecules such as cathepsins B/CTSB, H/CTSH, and L/CTSL. Participates in the regulation of hematopoietic stem cells during development and under homeostatic conditions by affecting their development, quiescence, and differentiation. The sequence is that of Interferon gamma (IFNG) from Ovis aries (Sheep).